The sequence spans 157 residues: uncharacterized protein (157 aa).

Residues 1 to 28 form the signal peptide; it reads MKRLFMKASLVLFAVVFVFAVKGAPAKA.

This is an uncharacterized protein from Bacillus subtilis (strain 168).